Here is a 1102-residue protein sequence, read N- to C-terminus: Carbamoyl phosphate synthase large chain (1102 aa).

The tract at residues 1 to 408 (MPKRTDIQSV…ALQKALRSLE (408 aa)) is carboxyphosphate synthetic domain. 12 residues coordinate ATP: R129, R175, G181, G182, E214, I216, E221, G247, V248, H249, Q291, and E305. Residues 138 to 334 (AVRAKIGHGE…IAKIAAKLAV (197 aa)) form the ATP-grasp 1 domain. Positions 291, 305, and 307 each coordinate Mg(2+). Mn(2+)-binding residues include Q291, E305, and N307. The oligomerization domain stretch occupies residues 409–551 (KKGSQFTFVG…YFYSSYDEES (143 aa)). The tract at residues 552-954 (EVAPREKPAV…AYAKSQAGAY (403 aa)) is carbamoyl phosphate synthetic domain. The ATP-grasp 2 domain maps to 682-873 (GQVLAEAGLP…LAKAAARISL (192 aa)). Residues R718, R757, L759, E764, G789, I790, H791, S792, Q832, and E844 each coordinate ATP. Mg(2+) contacts are provided by Q832, E844, and N846. Mn(2+) contacts are provided by Q832, E844, and N846. An MGS-like domain is found at 955-1100 (GPLPTKGRAF…QEHAEHLTAA (146 aa)). The allosteric domain stretch occupies residues 955–1102 (GPLPTKGRAF…HAEHLTAARD (148 aa)).

It belongs to the CarB family. In terms of assembly, composed of two chains; the small (or glutamine) chain promotes the hydrolysis of glutamine to ammonia, which is used by the large (or ammonia) chain to synthesize carbamoyl phosphate. Tetramer of heterodimers (alpha,beta)4. Mg(2+) is required as a cofactor. The cofactor is Mn(2+).

The enzyme catalyses hydrogencarbonate + L-glutamine + 2 ATP + H2O = carbamoyl phosphate + L-glutamate + 2 ADP + phosphate + 2 H(+). It carries out the reaction hydrogencarbonate + NH4(+) + 2 ATP = carbamoyl phosphate + 2 ADP + phosphate + 2 H(+). Its pathway is amino-acid biosynthesis; L-arginine biosynthesis; carbamoyl phosphate from bicarbonate: step 1/1. The protein operates within pyrimidine metabolism; UMP biosynthesis via de novo pathway; (S)-dihydroorotate from bicarbonate: step 1/3. In terms of biological role, large subunit of the glutamine-dependent carbamoyl phosphate synthetase (CPSase). CPSase catalyzes the formation of carbamoyl phosphate from the ammonia moiety of glutamine, carbonate, and phosphate donated by ATP, constituting the first step of 2 biosynthetic pathways, one leading to arginine and/or urea and the other to pyrimidine nucleotides. The large subunit (synthetase) binds the substrates ammonia (free or transferred from glutamine from the small subunit), hydrogencarbonate and ATP and carries out an ATP-coupled ligase reaction, activating hydrogencarbonate by forming carboxy phosphate which reacts with ammonia to form carbamoyl phosphate. The chain is Carbamoyl phosphate synthase large chain from Streptomyces avermitilis (strain ATCC 31267 / DSM 46492 / JCM 5070 / NBRC 14893 / NCIMB 12804 / NRRL 8165 / MA-4680).